We begin with the raw amino-acid sequence, 313 residues long: Probable cell division protein WhiA (313 aa).

A DNA-binding region (H-T-H motif) is located at residues 276–309 (SLKELGEMLHPKLGKSGVNHRLRKLDEIAERIRK).

This sequence belongs to the WhiA family.

Its function is as follows. Involved in cell division and chromosome segregation. The sequence is that of Probable cell division protein WhiA from Ruminiclostridium cellulolyticum (strain ATCC 35319 / DSM 5812 / JCM 6584 / H10) (Clostridium cellulolyticum).